The sequence spans 244 residues: Guanine nucleotide exchange factor rei-1 (244 aa).

2 coiled-coil regions span residues 6–39 (DQLISIRKQLENLNNATDDINSYEMKLETVKKQF) and 81–144 (VQQA…KAEK). Residues 221–244 (DQIHQERSSQSSLAPSSDAESDSS) are disordered. Over residues 228 to 238 (SSQSSLAPSSD) the composition is skewed to low complexity.

This sequence belongs to the SH3BP5 family. Homodimer, tetramer and multimer. Interacts with rab-11.1. Binds preferentially to the GDP-bound form of rab-11.1. Expressed in germ cells.

Its subcellular location is the cytoplasmic granule. The protein resides in the golgi apparatus membrane. Its function is as follows. Guanine nucleotide exchange factor for Rab GTPase Rab-11.1. Spatially and temporally regulates the distribution of Rab-11.1 to target membranes during embryogenesis. Plays a role in cytokinesis, probably by targeting rab-11.1 to the cleavage furrows. This chain is Guanine nucleotide exchange factor rei-1, found in Caenorhabditis elegans.